A 1450-amino-acid chain; its full sequence is Inactive serine/threonine-protein kinase TEX14 (1450 aa).

ANK repeat units lie at residues L27–T54, Q55–H84, and D88–L117. A phosphoserine mark is found at S175 and S186. One can recognise a Protein kinase domain in the interval I199–I512. Residues I205–F213 and K267 each bind ATP. At S431 the chain carries Phosphoserine; by PLK1. S561 and S662 each carry phosphoserine. The interval S700–S720 is disordered. Residues G791–Y797 carry the GPPX3Y motif. 4 disordered regions span residues V852–V906, P947–E977, D992–K1012, and Q1035–I1062. Composition is skewed to polar residues over residues K875–Q886 and K894–V906. The short motif at R889–N897 is the D-box element. Residues D992 to N1011 are compositionally biased toward basic and acidic residues. A compositionally biased stretch (polar residues) spans Q1038–P1061. 2 positions are modified to phosphoserine: S1060 and S1221. Disordered regions lie at residues T1261–L1282 and K1300–T1418. 2 stretches are compositionally biased toward polar residues: residues K1300–E1311 and T1332–R1344. Phosphoserine is present on residues S1357 and S1358. Composition is skewed to basic and acidic residues over residues S1383–Q1397 and S1404–D1413. 2 positions are modified to phosphoserine: S1412 and S1449.

Belongs to the protein kinase superfamily. Interacts with KIF23 and RBM44. Interacts with CEP55; inhibiting interaction between CEP55 and PDCD6IP/ALIX and TSG101. In terms of processing, phosphorylated on Thr residues by CDK1 during early phases of mitosis, promoting the interaction with PLK1 and recruitment to kinetochores. Phosphorylated on Ser-431 by PLK1 during late prometaphase promotes the rapid depletion from kinetochores and its subsequent degradation by the APC/C complex. Detected in testis and spermatogonia. Not detectable in the other tissues tested.

The protein resides in the cytoplasm. It is found in the midbody. It localises to the chromosome. The protein localises to the centromere. Its subcellular location is the kinetochore. Its function is as follows. Required both for the formation of intercellular bridges during meiosis and for kinetochore-microtubule attachment during mitosis. Intercellular bridges are evolutionarily conserved structures that connect differentiating germ cells and are required for spermatogenesis and male fertility. Acts by promoting the conversion of midbodies into intercellular bridges via its interaction with CEP55: interaction with CEP55 inhibits the interaction between CEP55 and PDCD6IP/ALIX and TSG101, blocking cell abscission and leading to transform midbodies into intercellular bridges. Also plays a role during mitosis: recruited to kinetochores by PLK1 during early mitosis and regulates the maturation of the outer kinetochores and microtubule attachment. Has no protein kinase activity in vitro. This Mus musculus (Mouse) protein is Inactive serine/threonine-protein kinase TEX14 (Tex14).